The following is a 463-amino-acid chain: L-seryl-tRNA(Sec) selenium transferase (463 aa).

Lys295 bears the N6-(pyridoxal phosphate)lysine mark.

This sequence belongs to the SelA family. Homodecamer; pentamer of dimers. Binds only one seryl-tRNA(Sec) per dimer. The cofactor is pyridoxal 5'-phosphate.

It localises to the cytoplasm. It catalyses the reaction L-seryl-tRNA(Sec) + selenophosphate + H(+) = L-selenocysteinyl-tRNA(Sec) + phosphate. It functions in the pathway aminoacyl-tRNA biosynthesis; selenocysteinyl-tRNA(Sec) biosynthesis; selenocysteinyl-tRNA(Sec) from L-seryl-tRNA(Sec) (bacterial route): step 1/1. Converts seryl-tRNA(Sec) to selenocysteinyl-tRNA(Sec) required for selenoprotein biosynthesis. The sequence is that of L-seryl-tRNA(Sec) selenium transferase from Escherichia coli O17:K52:H18 (strain UMN026 / ExPEC).